The chain runs to 889 residues: Terminal uridylyltransferase 3 (889 aa).

Residues 123–151 (VRCDLCAKMIESRDEEQIQEHFQVHHAAL) form a C2H2-type; atypical zinc finger. Positions 125, 128, 143, and 148 each coordinate Zn(2+). UTP contacts are provided by residues Ser-225 and 236–239 (SDAD). Mg(2+)-binding residues include Asp-237 and Asp-239. Arg-286 is an RNA binding site. Residues 394–398 (GVRNS), Lys-419, Lys-423, and 437–438 (SY) each bind UTP. Positions 505 to 572 (LGGLIPLFFL…LCIDDPYEDN (68 aa)) constitute a PAP-associated domain. A Nucleotide recognition motif (NRM) motif is present at residues 565–574 (IDDPYEDNFN). 2 disordered regions span residues 675–702 (NNKSKEGDDDAEGVTNNQEGEPPDHVES) and 829–849 (RKKSKGSKKRKNAVRRGNHAG). Residues 829 to 846 (RKKSKGSKKRKNAVRRGN) show a composition bias toward basic residues.

Belongs to the DNA polymerase type-B-like family. Mg(2+) is required as a cofactor. It depends on Mn(2+) as a cofactor.

It localises to the cytoplasm. It carries out the reaction RNA(n) + UTP = RNA(n)-3'-uridine ribonucleotide + diphosphate. In terms of biological role, terminal uridylyltransferase which catalyzes the addition of Us to the 3'-hydroxyl group of single-stranded RNAs. Does not mediate RNA-independent UTP polymerization. This Trypanosoma brucei brucei protein is Terminal uridylyltransferase 3.